A 379-amino-acid polypeptide reads, in one-letter code: Succinyl-diaminopimelate desuccinylase (379 aa).

His-70 contributes to the Zn(2+) binding site. The active site involves Asp-72. Zn(2+) is bound at residue Asp-103. The Proton acceptor role is filled by Glu-137. Zn(2+)-binding residues include Glu-138, Glu-166, and His-352.

The protein belongs to the peptidase M20A family. DapE subfamily. Homodimer. The cofactor is Zn(2+). Co(2+) serves as cofactor.

The enzyme catalyses N-succinyl-(2S,6S)-2,6-diaminopimelate + H2O = (2S,6S)-2,6-diaminopimelate + succinate. It participates in amino-acid biosynthesis; L-lysine biosynthesis via DAP pathway; LL-2,6-diaminopimelate from (S)-tetrahydrodipicolinate (succinylase route): step 3/3. Its function is as follows. Catalyzes the hydrolysis of N-succinyl-L,L-diaminopimelic acid (SDAP), forming succinate and LL-2,6-diaminopimelate (DAP), an intermediate involved in the bacterial biosynthesis of lysine and meso-diaminopimelic acid, an essential component of bacterial cell walls. This chain is Succinyl-diaminopimelate desuccinylase, found in Burkholderia ambifaria (strain MC40-6).